A 270-amino-acid chain; its full sequence is 3-methyl-2-oxobutanoate hydroxymethyltransferase (270 aa).

Mg(2+) is bound by residues aspartate 50 and aspartate 89. 3-methyl-2-oxobutanoate is bound by residues 50-51 (DS), aspartate 89, and lysine 118. Glutamate 120 is a Mg(2+) binding site. The active-site Proton acceptor is the glutamate 187.

The protein belongs to the PanB family. As to quaternary structure, homodecamer; pentamer of dimers. It depends on Mg(2+) as a cofactor.

It localises to the cytoplasm. The enzyme catalyses 3-methyl-2-oxobutanoate + (6R)-5,10-methylene-5,6,7,8-tetrahydrofolate + H2O = 2-dehydropantoate + (6S)-5,6,7,8-tetrahydrofolate. The protein operates within cofactor biosynthesis; (R)-pantothenate biosynthesis; (R)-pantoate from 3-methyl-2-oxobutanoate: step 1/2. Functionally, catalyzes the reversible reaction in which hydroxymethyl group from 5,10-methylenetetrahydrofolate is transferred onto alpha-ketoisovalerate to form ketopantoate. In Helicobacter pylori (strain Shi470), this protein is 3-methyl-2-oxobutanoate hydroxymethyltransferase.